A 1706-amino-acid polypeptide reads, in one-letter code: Histone acetyltransferase HAC12 (1706 aa).

Disordered regions lie at residues 1 to 33 (MNVQ…MQNL), 251 to 284 (TNNN…NSHM), 397 to 456 (VSRV…LGKT), and 524 to 543 (QNSQ…SDSS). A compositionally biased stretch (polar residues) spans 397 to 406 (VSRVNSSLSH). Positions 407-434 (QQQFQQPPNRFQQQPNQIQQQQQQFLNQ) are enriched in low complexity. A TAZ-type 1 zinc finger spans residues 637 to 716 (HDPKFKNQQR…DPRCPVCVPV (80 aa)). The segment at 791-909 (TESCKSSIVS…PELTSKSRKP (119 aa)) is disordered. Over residues 794–805 (CKSSIVSTTEAD) the composition is skewed to polar residues. Basic and acidic residues-rich tracts occupy residues 809–829 (DAER…KVEI) and 870–896 (PKQE…KEEL). Residues 998 to 1075 (HYFCIPCYNE…EYTCPYCYVI (78 aa)) form a PHD-type zinc finger. One can recognise a CBP/p300-type HAT domain in the interval 1090 to 1526 (VLGAKDLPRT…VLYHLHNPTA (437 aa)). Residues 1213–1215 (LDS), 1232–1233 (RT), and W1288 contribute to the acetyl-CoA site. 2 consecutive ZZ-type zinc fingers follow at residues 1408–1471 (HLQH…IADI) and 1528–1581 (AFVT…SLAD). 16 residues coordinate Zn(2+): C1413, C1416, C1428, C1431, C1437, C1440, H1453, H1461, C1533, C1536, C1548, C1551, C1557, C1560, H1569, and H1571. The TAZ-type 2 zinc-finger motif lies at 1588–1671 (EARQLRVLQL…ECDVPRCGDL (84 aa)).

Its subcellular location is the nucleus. The enzyme catalyses L-lysyl-[protein] + acetyl-CoA = N(6)-acetyl-L-lysyl-[protein] + CoA + H(+). In terms of biological role, acetyltransferase enzyme. Acetylates histones, giving a specific tag for transcriptional activation. The polypeptide is Histone acetyltransferase HAC12 (HAC12) (Arabidopsis thaliana (Mouse-ear cress)).